The chain runs to 147 residues: Large ribosomal subunit protein uL15 (147 aa).

The interval 1–58 is disordered; the sequence is MKLFELKPAPGAKKRPKRVGRGESSGHGKTSTRGHKGQWARSGGGVRPGFEGGQMPLT. Gly residues predominate over residues 42 to 52; that stretch reads SGGGVRPGFEG.

The protein belongs to the universal ribosomal protein uL15 family. As to quaternary structure, part of the 50S ribosomal subunit.

In terms of biological role, binds to the 23S rRNA. The polypeptide is Large ribosomal subunit protein uL15 (Caldicellulosiruptor saccharolyticus (strain ATCC 43494 / DSM 8903 / Tp8T 6331)).